The primary structure comprises 205 residues: Small ribosomal subunit protein uS4 (205 aa).

The segment at W20–K44 is disordered. The 61-residue stretch at S94–L154 folds into the S4 RNA-binding domain.

The protein belongs to the universal ribosomal protein uS4 family. Part of the 30S ribosomal subunit. Contacts protein S5. The interaction surface between S4 and S5 is involved in control of translational fidelity.

Its function is as follows. One of the primary rRNA binding proteins, it binds directly to 16S rRNA where it nucleates assembly of the body of the 30S subunit. With S5 and S12 plays an important role in translational accuracy. The sequence is that of Small ribosomal subunit protein uS4 from Bartonella bacilliformis (strain ATCC 35685 / KC583 / Herrer 020/F12,63).